A 163-amino-acid chain; its full sequence is uncharacterized protein (163 aa).

Residues 1–33 (MKTLDKITNYDLFDFADEFLKFVPVFRPNPTVT) lie on the Cytoplasmic side of the membrane. The chain crosses the membrane as a helical span at residues 34 to 54 (CLFGNPLTNLLVNGTGAACFF). Residues 55 to 117 (EFCSLALIKV…SLGMALPDDD (63 aa)) lie on the Extracellular side of the membrane. The helical transmembrane segment at 118 to 138 (VLLSITFWFLCNSSFSILFVF) threads the bilayer. Residues 139 to 163 (ELRIFLRTVNNLLVVFLSVLKRNDL) lie on the Cytoplasmic side of the membrane.

The protein localises to the membrane. This is an uncharacterized protein from Saccharomyces cerevisiae (strain ATCC 204508 / S288c) (Baker's yeast).